Reading from the N-terminus, the 303-residue chain is Aspartate carbamoyltransferase catalytic subunit (303 aa).

2 residues coordinate carbamoyl phosphate: Arg49 and Thr50. Residue Lys77 participates in L-aspartate binding. Arg99, His126, and Gln129 together coordinate carbamoyl phosphate. Positions 159 and 211 each coordinate L-aspartate. Carbamoyl phosphate-binding residues include Ser252 and Pro253.

The protein belongs to the aspartate/ornithine carbamoyltransferase superfamily. ATCase family. Heterododecamer (2C3:3R2) of six catalytic PyrB chains organized as two trimers (C3), and six regulatory PyrI chains organized as three dimers (R2).

It carries out the reaction carbamoyl phosphate + L-aspartate = N-carbamoyl-L-aspartate + phosphate + H(+). Its pathway is pyrimidine metabolism; UMP biosynthesis via de novo pathway; (S)-dihydroorotate from bicarbonate: step 2/3. Its function is as follows. Catalyzes the condensation of carbamoyl phosphate and aspartate to form carbamoyl aspartate and inorganic phosphate, the committed step in the de novo pyrimidine nucleotide biosynthesis pathway. This is Aspartate carbamoyltransferase catalytic subunit from Listeria monocytogenes serovar 1/2a (strain ATCC BAA-679 / EGD-e).